The primary structure comprises 509 residues: Maturase K (509 aa).

The protein belongs to the intron maturase 2 family. MatK subfamily.

Its subcellular location is the plastid. The protein localises to the chloroplast. Usually encoded in the trnK tRNA gene intron. Probably assists in splicing its own and other chloroplast group II introns. In Nicotiana paniculata, this protein is Maturase K.